Here is a 187-residue protein sequence, read N- to C-terminus: UPF0301 protein SO_3346 (187 aa).

The protein belongs to the UPF0301 (AlgH) family.

In Shewanella oneidensis (strain ATCC 700550 / JCM 31522 / CIP 106686 / LMG 19005 / NCIMB 14063 / MR-1), this protein is UPF0301 protein SO_3346.